The sequence spans 189 residues: Phomopsin biosynthesis cluster protein C' (189 aa).

It belongs to the oryJ family.

Functionally, part of the gene cluster that mediates the biosynthesis of the phomopsins, a group of hexapeptide mycotoxins which infects lupins and causes lupinosis disease in livestock. The role of phomC' within the phomopsins biosynthesis pathway has still to be determined. The pathway starts with the processing of the precursor phomA by several endopeptidases including kexin proteases as well as the cluster-specific S41 family peptidase phomP1 and the oligopeptidase phomG to produce 10 identical copies of the hexapeptide Tyr-Val-Ile-Pro-Ile-Asp. After being excised from the precursor peptide, the core peptides are cyclized and modified post-translationally by enzymes encoded within the gene cluster. The timing and order of proteolysis of the phomA precursor and PTMs are still unknown. Two tyrosinase-like enzymes, phomQ1 and phomQ2, catalyze the chlorination and hydroxylation of Tyr, respectively. PhomYb, is proposed to be involved in the construction of the macrocyclic structure. The other 4 ustYa family proteins may be involved in PTMs that generate the unique structure of phomopsin A. PhomYa is required for the hydroxylation of C-beta of Tyr. PhomYc, phomYd, and phomYe are responsible for the biosynthesis of 2,3-dehydroisoleucine (dIle), 2,3-dehydroaspartic acid (dAsp), and 3,4-dehydroproline (dPro), respectively. While dIle formation by phomYc is indispensable for the installation of dAsp by phomYd, the order of the other PTMs have not been elucidated yet. Most of the biosynthetic enzymes likely have broad substrate specificity, and thus, there might be a metabolic grid from a precursor to phomopsin A. The enzyme(s) responsible for the biosynthesis of 3,4-dehydrovaline (dVal) have also not been identified yet. Finally, phomM acts as an S-adenosylmethionine-dependent alpha-N-methyltransferase that catalyzes two successive N-methylation reactions, converting N-desmethyl-phomopsin A to phomopsin A and phomopsin A further to an N,N-dimethylated congener called phomopsin E. This chain is Phomopsin biosynthesis cluster protein C', found in Diaporthe leptostromiformis (Lupinosis disease fungus).